A 533-amino-acid polypeptide reads, in one-letter code: (E)-beta-farnesene synthase (533 aa).

5 residues coordinate Mg(2+): Asp-286, Asp-290, Asn-430, Ser-434, and Glu-438. Residues 286 to 290 (DDMMD) carry the DDXXD motif motif.

This sequence belongs to the terpene synthase family. It depends on Mg(2+) as a cofactor. The cofactor is Co(2+). Requires Mn(2+) as cofactor.

Its subcellular location is the cytoplasm. It carries out the reaction (2E,6E)-farnesyl diphosphate = (E)-beta-farnesene + diphosphate. It functions in the pathway secondary metabolite biosynthesis; terpenoid biosynthesis. Functionally, sesquiterpene cyclase catalyzing the production of sixfold more beta-farnesene than alpha-bergamotene from farnesyl diphosphate. Involved in indirect defense by producing volatile signals attracting natural enemies of herbivores. The protein is (E)-beta-farnesene synthase of Zea diploperennis (Diploperennial teosinte).